The following is a 247-amino-acid chain: Coproheme decarboxylase (247 aa).

Fe-coproporphyrin III-binding positions include Arg-129, 143–147 (YPMDK), His-170, Gln-183, and Ser-221. Tyr-143 is a catalytic residue.

The protein belongs to the ChdC family. Type 1 subfamily. Fe-coproporphyrin III serves as cofactor.

The enzyme catalyses Fe-coproporphyrin III + 2 H2O2 + 2 H(+) = heme b + 2 CO2 + 4 H2O. The catalysed reaction is Fe-coproporphyrin III + H2O2 + H(+) = harderoheme III + CO2 + 2 H2O. It catalyses the reaction harderoheme III + H2O2 + H(+) = heme b + CO2 + 2 H2O. The protein operates within porphyrin-containing compound metabolism; protoheme biosynthesis. Involved in coproporphyrin-dependent heme b biosynthesis. Catalyzes the decarboxylation of Fe-coproporphyrin III (coproheme) to heme b (protoheme IX), the last step of the pathway. The reaction occurs in a stepwise manner with a three-propionate intermediate. This Bacillus mycoides (strain KBAB4) (Bacillus weihenstephanensis) protein is Coproheme decarboxylase.